The following is a 536-amino-acid chain: CTP synthase (536 aa).

Residues 1 to 267 (MTKFIFVTGG…DDIVIKRLEL (267 aa)) are amidoligase domain. Serine 13 is a binding site for CTP. Serine 13 is a binding site for UTP. Residue 14–19 (SLGKGI) participates in ATP binding. Tyrosine 54 contributes to the L-glutamine binding site. Residue aspartate 71 participates in ATP binding. Mg(2+)-binding residues include aspartate 71 and glutamate 141. Residues 148–150 (DIE), 188–193 (KTKPTQ), and lysine 224 contribute to the CTP site. Residues 188–193 (KTKPTQ) and lysine 224 contribute to the UTP site. Residue 240-242 (RDA) coordinates ATP. Residues 293-535 (TIGLVGKYVS…IEASLNHQQS (243 aa)) enclose the Glutamine amidotransferase type-1 domain. Residue glycine 355 participates in L-glutamine binding. Residue cysteine 382 is the Nucleophile; for glutamine hydrolysis of the active site. Residues 383-386 (LGMQ), glutamate 406, and arginine 463 contribute to the L-glutamine site. Catalysis depends on residues histidine 508 and glutamate 510.

It belongs to the CTP synthase family. In terms of assembly, homotetramer.

The catalysed reaction is UTP + L-glutamine + ATP + H2O = CTP + L-glutamate + ADP + phosphate + 2 H(+). It carries out the reaction L-glutamine + H2O = L-glutamate + NH4(+). The enzyme catalyses UTP + NH4(+) + ATP = CTP + ADP + phosphate + 2 H(+). The protein operates within pyrimidine metabolism; CTP biosynthesis via de novo pathway; CTP from UDP: step 2/2. Allosterically activated by GTP, when glutamine is the substrate; GTP has no effect on the reaction when ammonia is the substrate. The allosteric effector GTP functions by stabilizing the protein conformation that binds the tetrahedral intermediate(s) formed during glutamine hydrolysis. Inhibited by the product CTP, via allosteric rather than competitive inhibition. In terms of biological role, catalyzes the ATP-dependent amination of UTP to CTP with either L-glutamine or ammonia as the source of nitrogen. Regulates intracellular CTP levels through interactions with the four ribonucleotide triphosphates. The polypeptide is CTP synthase (Staphylococcus saprophyticus subsp. saprophyticus (strain ATCC 15305 / DSM 20229 / NCIMB 8711 / NCTC 7292 / S-41)).